A 351-amino-acid polypeptide reads, in one-letter code: Holliday junction branch migration complex subunit RuvB (351 aa).

Residues 1–189 are large ATPase domain (RuvB-L); that stretch reads MTAHDADWSD…FGFTAHMDFY (189 aa). ATP contacts are provided by residues Leu-28, Arg-29, Gly-70, Lys-73, Thr-74, Ser-75, 136–138, Arg-179, Tyr-189, and Arg-226; that span reads EDF. Thr-74 is a binding site for Mg(2+). The segment at 190–260 is small ATPAse domain (RuvB-S); that stretch reads EPAELQQVLA…VAKAALAVYD (71 aa). The segment at 263–351 is head domain (RuvB-H); sequence ELGLDRLDRA…AGLGQPGLFD (89 aa). Residues Arg-318 and Arg-323 each contribute to the DNA site.

This sequence belongs to the RuvB family. As to quaternary structure, homohexamer. Forms an RuvA(8)-RuvB(12)-Holliday junction (HJ) complex. HJ DNA is sandwiched between 2 RuvA tetramers; dsDNA enters through RuvA and exits via RuvB. An RuvB hexamer assembles on each DNA strand where it exits the tetramer. Each RuvB hexamer is contacted by two RuvA subunits (via domain III) on 2 adjacent RuvB subunits; this complex drives branch migration. In the full resolvosome a probable DNA-RuvA(4)-RuvB(12)-RuvC(2) complex forms which resolves the HJ.

It localises to the cytoplasm. It carries out the reaction ATP + H2O = ADP + phosphate + H(+). Functionally, the RuvA-RuvB-RuvC complex processes Holliday junction (HJ) DNA during genetic recombination and DNA repair, while the RuvA-RuvB complex plays an important role in the rescue of blocked DNA replication forks via replication fork reversal (RFR). RuvA specifically binds to HJ cruciform DNA, conferring on it an open structure. The RuvB hexamer acts as an ATP-dependent pump, pulling dsDNA into and through the RuvAB complex. RuvB forms 2 homohexamers on either side of HJ DNA bound by 1 or 2 RuvA tetramers; 4 subunits per hexamer contact DNA at a time. Coordinated motions by a converter formed by DNA-disengaged RuvB subunits stimulates ATP hydrolysis and nucleotide exchange. Immobilization of the converter enables RuvB to convert the ATP-contained energy into a lever motion, pulling 2 nucleotides of DNA out of the RuvA tetramer per ATP hydrolyzed, thus driving DNA branch migration. The RuvB motors rotate together with the DNA substrate, which together with the progressing nucleotide cycle form the mechanistic basis for DNA recombination by continuous HJ branch migration. Branch migration allows RuvC to scan DNA until it finds its consensus sequence, where it cleaves and resolves cruciform DNA. The polypeptide is Holliday junction branch migration complex subunit RuvB (Mycobacterium avium (strain 104)).